Consider the following 894-residue polypeptide: MAMASSRNGAVRGSMRPVSGANSSNLRSSSFKSRIPSSAPAPRRSSSASIGAADNGVPGRVRVAVRLRPRNADESVADADFADCVELQPELKRLKLRKNNWDTETYEFDEVLTEAASQKRVYEVVAKPVVESVLEGYNGTVMAYGQTGTGKTFTLGRLGDEDTAARGIMVRSMEDIIGGTSLDTDSISVSYLQLYMETIQDLLDPTNDNIAIVEDPRTGDVSLPGATHVEIRNQQNFLELLQLGETHRVAANTKLNTESSRSHAILMVHVKRSVVENEFPVSNEMESSSHFVRPSKPLVRRSKLVLVDLAGSERVHKSGSEGHMLEEAKSINLSLSALGKCINAIAENSPHVPLRDSKLTRLLRDSFGGTARTSLIVTIGPSPRHRGETTSTILFGQRAMKVENMLKIKEEFDYKSLSKKLEVQLDKVIAENERQLKAFDDDVERINRQAQNRISEVEKNFAEALEKEKLKCQMEYMESVKKLEEKLISNQRNHENGKRNGEVNGVVTASEFTRLKESLENEMKLRKSAEEEVSKVKSQSTLKTRSGEGEDAGITRLQKLLEDEALQKKKLEEEVTILRSQLVQLTFEADQMRRCLDRGAPGNSYSGTDSLPSRHSQARESVNGQKAPFATLCEQVGLQKILQLLESDDANIRIHAVKVVANLAAEEANQEKIVEAGGLTSLLMLLRSYEDETVRRVAAGAIANLAMNEVSQQLIVDQGGISLLSLTAADAEDPQTLRMVAGAIANLCGNDKLQARLWSDGGIKALLGMVRCGHPDVLAQVARGIANFAKCESRATTQGVKSGRSLLIEDGALPWIVQHANDEAAPIRRHIELALCHLAQHEVNAKEMISGGALWELVRISKECSREDIRSLAHRTLSSSPVFRSEIRRLGIQF.

A disordered region spans residues 1-53 (MAMASSRNGAVRGSMRPVSGANSSNLRSSSFKSRIPSSAPAPRRSSSASIGAA). Residues 19 to 50 (SGANSSNLRSSSFKSRIPSSAPAPRRSSSASI) are compositionally biased toward low complexity. The Kinesin motor domain occupies 60-402 (RVRVAVRLRP…ILFGQRAMKV (343 aa)). 145-152 (GQTGTGKT) serves as a coordination point for ATP. The D-BOX motif lies at 372-380 (RTSLIVTIG). Residues 423 to 588 (VQLDKVIAEN…RSQLVQLTFE (166 aa)) adopt a coiled-coil conformation. Disordered regions lie at residues 530–550 (EEEV…GEGE) and 598–623 (RGAP…ESVN). Residues 603-623 (NSYSGTDSLPSRHSQARESVN) are compositionally biased toward polar residues. 4 ARM repeats span residues 626–665 (KAPF…NLAA), 667–707 (EANQ…NLAM), 709–749 (EVSQ…NLCG), and 751–790 (DKLQ…NFAK).

The protein belongs to the TRAFAC class myosin-kinesin ATPase superfamily. Kinesin family. Ungrouped subfamily. As to quaternary structure, interacts (via C-terminus) with NEK5. As to expression, expressed in the basal regions and petioles of immature leaves and in the root elongation zone.

It is found in the cytoplasm. It localises to the cytoskeleton. Its function is as follows. Involved in the control of epidermal-cell morphogenesis in roots and helical growth of roots by promoting microtubule depolymerization and limiting the accumulation of endoplasmic microtubules. Seems to be involved in the control of cell-file rotation (or twisting). The chain is Kinesin-like protein KIN-UB from Arabidopsis thaliana (Mouse-ear cress).